We begin with the raw amino-acid sequence, 220 residues long: Deoxyribose-phosphate aldolase (220 aa).

Aspartate 89 (proton donor/acceptor) is an active-site residue. Lysine 151 acts as the Schiff-base intermediate with acetaldehyde in catalysis. Residue lysine 180 is the Proton donor/acceptor of the active site.

It belongs to the DeoC/FbaB aldolase family. DeoC type 1 subfamily.

The protein localises to the cytoplasm. It carries out the reaction 2-deoxy-D-ribose 5-phosphate = D-glyceraldehyde 3-phosphate + acetaldehyde. The protein operates within carbohydrate degradation; 2-deoxy-D-ribose 1-phosphate degradation; D-glyceraldehyde 3-phosphate and acetaldehyde from 2-deoxy-alpha-D-ribose 1-phosphate: step 2/2. Functionally, catalyzes a reversible aldol reaction between acetaldehyde and D-glyceraldehyde 3-phosphate to generate 2-deoxy-D-ribose 5-phosphate. The protein is Deoxyribose-phosphate aldolase of Lactococcus lactis subsp. lactis (strain IL1403) (Streptococcus lactis).